A 621-amino-acid chain; its full sequence is Zinc metalloproteinase-disintegrin-like TSV-DM (621 aa).

The first 20 residues, 1–20 (MIQVLLVTICLAVFPYQGSS), serve as a signal peptide directing secretion. Positions 21 to 191 (IILESGNVND…EASQSNLTPE (171 aa)) are excised as a propeptide. Gln192 carries the post-translational modification Pyrrolidone carboxylic acid. In terms of domain architecture, Peptidase M12B spans 200–396 (KYVKFFLVAD…NMPQCILKKP (197 aa)). Residue Asn219 is glycosylated (N-linked (GlcNAc...) asparagine). 3 disulfides stabilise this stretch: Cys311/Cys391, Cys351/Cys375, and Cys353/Cys358. His336 lines the Zn(2+) pocket. Glu337 is a catalytic residue. His340 and His346 together coordinate Zn(2+). In terms of domain architecture, Disintegrin spans 404-489 (PPVCGNYFVE…AECTDRFQRN (86 aa)). Ca(2+)-binding residues include Val406, Asn409, Phe411, Glu413, Glu416, and Asp419. 14 disulfide bridges follow: Cys407-Cys436, Cys418-Cys431, Cys420-Cys426, Cys430-Cys453, Cys444-Cys450, Cys449-Cys475, Cys462-Cys482, Cys469-Cys500, Cys493-Cys505, Cys512-Cys562, Cys527-Cys573, Cys540-Cys550, Cys557-Cys599, and Cys593-Cys605. A D/ECD-tripeptide motif is present at residues 468 to 470 (ECD). Ca(2+)-binding residues include Asp470, Met471, Asp473, Asp484, and Arg485. N-linked (GlcNAc...) asparagine glycosylation occurs at Asn502.

The protein belongs to the venom metalloproteinase (M12B) family. P-III subfamily. P-IIIc sub-subfamily. In terms of assembly, homodimer; disulfide-linked. It depends on Zn(2+) as a cofactor. In terms of processing, the N-terminus is blocked. In terms of tissue distribution, expressed by the venom gland.

It localises to the secreted. With respect to regulation, inhibited by EDTA and DTT, and partially inhibited by EGTA, but not inhibited by PMSF and NEM. Functionally, snake venom zinc metalloprotease that hydrolyzes the alpha-chain (FGA) and more slowly the beta-chain (FGB) of fibrinogen. Inhibits cell proliferation and induces cell morphologic changes transiently on human umbilical vein endothelial cells. In Trimeresurus stejnegeri (Chinese green tree viper), this protein is Zinc metalloproteinase-disintegrin-like TSV-DM.